Reading from the N-terminus, the 131-residue chain is Profilin-7 (131 aa).

Residues C13 and C115 are joined by a disulfide bond. The Involved in PIP2 interaction signature appears at 81–97 (AVIRGKKGAGGITIKKT). T111 is modified (phosphothreonine).

The protein belongs to the profilin family. In terms of assembly, occurs in many kinds of cells as a complex with monomeric actin in a 1:1 ratio. Phosphorylated by MAP kinases.

The protein resides in the cytoplasm. The protein localises to the cytoskeleton. Binds to actin and affects the structure of the cytoskeleton. At high concentrations, profilin prevents the polymerization of actin, whereas it enhances it at low concentrations. The polypeptide is Profilin-7 (Olea europaea (Common olive)).